Consider the following 87-residue polypeptide: Small ribosomal subunit protein uS17 (87 aa).

The protein belongs to the universal ribosomal protein uS17 family. Part of the 30S ribosomal subunit.

Functionally, one of the primary rRNA binding proteins, it binds specifically to the 5'-end of 16S ribosomal RNA. The polypeptide is Small ribosomal subunit protein uS17 (Onion yellows phytoplasma (strain OY-M)).